A 504-amino-acid chain; its full sequence is Glutamate--tRNA ligase (504 aa).

The 'HIGH' region motif lies at 14–24 (PSPTGYLHVGG). Positions 261–265 (KLSKR) match the 'KMSKS' region motif. Lys264 is an ATP binding site.

The protein belongs to the class-I aminoacyl-tRNA synthetase family. Glutamate--tRNA ligase type 1 subfamily. Monomer.

It is found in the cytoplasm. It catalyses the reaction tRNA(Glu) + L-glutamate + ATP = L-glutamyl-tRNA(Glu) + AMP + diphosphate. Its function is as follows. Catalyzes the attachment of glutamate to tRNA(Glu) in a two-step reaction: glutamate is first activated by ATP to form Glu-AMP and then transferred to the acceptor end of tRNA(Glu). The chain is Glutamate--tRNA ligase from Chlorobium luteolum (strain DSM 273 / BCRC 81028 / 2530) (Pelodictyon luteolum).